Consider the following 388-residue polypeptide: S-adenosylmethionine synthase (388 aa).

ATP is bound at residue histidine 17. Position 19 (aspartate 19) interacts with Mg(2+). A K(+)-binding site is contributed by glutamate 45. L-methionine is bound by residues glutamate 58 and glutamine 106. The segment at 106-116 (QSAHISQGVDR) is flexible loop. ATP is bound by residues 166–168 (DAK), aspartate 241, 247–248 (RK), alanine 264, and lysine 268. Aspartate 241 lines the L-methionine pocket. Lysine 272 provides a ligand contact to L-methionine.

The protein belongs to the AdoMet synthase family. In terms of assembly, homotetramer; dimer of dimers. Requires Mg(2+) as cofactor. K(+) serves as cofactor.

Its subcellular location is the cytoplasm. It catalyses the reaction L-methionine + ATP + H2O = S-adenosyl-L-methionine + phosphate + diphosphate. The protein operates within amino-acid biosynthesis; S-adenosyl-L-methionine biosynthesis; S-adenosyl-L-methionine from L-methionine: step 1/1. Catalyzes the formation of S-adenosylmethionine (AdoMet) from methionine and ATP. The overall synthetic reaction is composed of two sequential steps, AdoMet formation and the subsequent tripolyphosphate hydrolysis which occurs prior to release of AdoMet from the enzyme. The polypeptide is S-adenosylmethionine synthase (Paracoccus denitrificans (strain Pd 1222)).